Here is a 243-residue protein sequence, read N- to C-terminus: Transmembrane protein 174 (243 aa).

Helical transmembrane passes span 40–60 and 73–93; these read LLFSGIFLGLVGITFTVMGWI and LLGPILLSVGVTFILIAVCKF.

Interacts with SLC34A1; regulates SLC34A1 internalization by PTH and FGF23. In terms of tissue distribution, kidney specific. Expressed in renal primary proximal tubule cells.

It localises to the endoplasmic reticulum membrane. The protein localises to the apical cell membrane. Functionally, regulator of plasma phosphate homeostasis. Decreases serum inorganic phosphate (Pi) uptake by regulating the sodium-phosphate cotransporter SLC34A1 trafficking by PTH and FGF23 in the kidney. In Mus musculus (Mouse), this protein is Transmembrane protein 174 (Tmem174).